The sequence spans 205 residues: Holliday junction branch migration complex subunit RuvA (205 aa).

The segment at 1 to 63 (MIDFVEGTLS…EDAILLYGFA (63 aa)) is domain I. Positions 64-142 (TRDERDLFRK…GYTPSAILTV (79 aa)) are domain II. The segment at 143 to 153 (AAGDLTAGEQA) is flexible linker. The segment at 153-205 (AVSALNEALDALTALGYSDGELQKIRNTLSEKSKEGDGVEKLIKQGLALLMRG) is domain III.

It belongs to the RuvA family. Homotetramer. Forms an RuvA(8)-RuvB(12)-Holliday junction (HJ) complex. HJ DNA is sandwiched between 2 RuvA tetramers; dsDNA enters through RuvA and exits via RuvB. An RuvB hexamer assembles on each DNA strand where it exits the tetramer. Each RuvB hexamer is contacted by two RuvA subunits (via domain III) on 2 adjacent RuvB subunits; this complex drives branch migration. In the full resolvosome a probable DNA-RuvA(4)-RuvB(12)-RuvC(2) complex forms which resolves the HJ.

The protein resides in the cytoplasm. In terms of biological role, the RuvA-RuvB-RuvC complex processes Holliday junction (HJ) DNA during genetic recombination and DNA repair, while the RuvA-RuvB complex plays an important role in the rescue of blocked DNA replication forks via replication fork reversal (RFR). RuvA specifically binds to HJ cruciform DNA, conferring on it an open structure. The RuvB hexamer acts as an ATP-dependent pump, pulling dsDNA into and through the RuvAB complex. HJ branch migration allows RuvC to scan DNA until it finds its consensus sequence, where it cleaves and resolves the cruciform DNA. This is Holliday junction branch migration complex subunit RuvA from Brevibacillus brevis (strain 47 / JCM 6285 / NBRC 100599).